The sequence spans 350 residues: Alcohol dehydrogenase 1 (350 aa).

Zn(2+)-binding residues include cysteine 46, histidine 69, cysteine 100, cysteine 103, cysteine 106, cysteine 114, and cysteine 156. NAD(+) is bound by residues 180–186, aspartate 204, lysine 209, 271–273, and arginine 343; these read GAAGGLG and VGL.

The protein belongs to the zinc-containing alcohol dehydrogenase family. Homotetramer. Requires Zn(2+) as cofactor.

It localises to the cytoplasm. The enzyme catalyses a primary alcohol + NAD(+) = an aldehyde + NADH + H(+). It carries out the reaction a secondary alcohol + NAD(+) = a ketone + NADH + H(+). This is Alcohol dehydrogenase 1 (ADH1) from Kluyveromyces lactis (strain ATCC 8585 / CBS 2359 / DSM 70799 / NBRC 1267 / NRRL Y-1140 / WM37) (Yeast).